The chain runs to 339 residues: Glycerol-3-phosphate dehydrogenase [NAD(P)+] (339 aa).

4 residues coordinate NADPH: S15, Y16, H36, and K110. Sn-glycerol 3-phosphate-binding residues include K110, G139, and T141. A143 contacts NADPH. Sn-glycerol 3-phosphate contacts are provided by K195, D248, S258, R259, and N260. K195 acts as the Proton acceptor in catalysis. R259 provides a ligand contact to NADPH. Residues V283 and E285 each contribute to the NADPH site.

This sequence belongs to the NAD-dependent glycerol-3-phosphate dehydrogenase family.

It localises to the cytoplasm. It catalyses the reaction sn-glycerol 3-phosphate + NAD(+) = dihydroxyacetone phosphate + NADH + H(+). The catalysed reaction is sn-glycerol 3-phosphate + NADP(+) = dihydroxyacetone phosphate + NADPH + H(+). It functions in the pathway membrane lipid metabolism; glycerophospholipid metabolism. In terms of biological role, catalyzes the reduction of the glycolytic intermediate dihydroxyacetone phosphate (DHAP) to sn-glycerol 3-phosphate (G3P), the key precursor for phospholipid synthesis. The polypeptide is Glycerol-3-phosphate dehydrogenase [NAD(P)+] (Serratia proteamaculans (strain 568)).